Consider the following 46-residue polypeptide: Antimicrobial peptide eNAP-2 (46 aa).

The WAP domain maps to 12 to 46 (RPGRCPTVPPGTFGHCACLCTGDASEPKGQKCCSN).

In terms of biological role, has antibiotic activity against several equine uterine pathogens; S.zooepidemicus, E.coli and P.aeruginosa. Highly efficient against S.zoopedemicus. Not active against K.pneumoniae. Selectively inactivates microbial serine proteases (subtilisin A and proteinase K) without inhibiting mammalian serine proteases (human neutrophil elastase, human cathepsin G and bovine pancreatic trypsin). The polypeptide is Antimicrobial peptide eNAP-2 (Equus caballus (Horse)).